The primary structure comprises 82 residues: MATINVYVFAFIFLLTISVGSIEGRKLTKFTVTTSEEIRAGGSVLSSSPPTEPLESPPSHGVDTFRPTEPGHSPGIGHSVHN.

The signal sequence occupies residues 1–24 (MATINVYVFAFIFLLTISVGSIEG). A propeptide spanning residues 25 to 63 (RKLTKFTVTTSEEIRAGGSVLSSSPPTEPLESPPSHGVD) is cleaved from the precursor. The tract at residues 40–82 (AGGSVLSSSPPTEPLESPPSHGVDTFRPTEPGHSPGIGHSVHN) is disordered. 3 positions are modified to hydroxyproline: Pro-67, Pro-70, and Pro-74. Residues 79–82 (SVHN) constitute a propeptide that is removed on maturation.

This sequence belongs to the C-terminally encoded plant signaling peptide (CEP) family. As to quaternary structure, interacts with the CEP receptor CEPR1. The mature small signaling peptide is generated by proteolytic processing of the longer precursor. As to expression, mostly expressed in roots. Present in lateral roots (especially in vasculature), root-hypocotyl junction and cotyledons.

It localises to the secreted. Its subcellular location is the extracellular space. It is found in the apoplast. In terms of biological role, extracellular signaling peptide that represses primary root growth rate and significantly inhibits lateral root formation. Promotes shoot growth. Modulates leaf morphology. Regulates systemic nitrogen (N)-demand signaling. Mediates systemic up-regulation of genes involved in N uptake and assimilation pathways. The polypeptide is Precursor of CEP3 (Arabidopsis thaliana (Mouse-ear cress)).